The sequence spans 845 residues: Leucine--tRNA ligase (845 aa).

The 'HIGH' region motif lies at P40–H51. Residues K623 to S627 carry the 'KMSKS' region motif. ATP is bound at residue K626.

Belongs to the class-I aminoacyl-tRNA synthetase family.

It localises to the cytoplasm. The enzyme catalyses tRNA(Leu) + L-leucine + ATP = L-leucyl-tRNA(Leu) + AMP + diphosphate. The protein is Leucine--tRNA ligase of Protochlamydia amoebophila (strain UWE25).